The chain runs to 966 residues: Mitogen-activated protein kinase kinase kinase 13 (966 aa).

Disordered regions lie at residues 1 to 22 (MANFQEHLSCSSSPHLPFSESK), 30 to 49 (ELTAMGNHPSPKLLEDQQEK), and 90 to 114 (HDESETAVSQGNSNTVDGESTSGTE). Polar residues predominate over residues 95–113 (TAVSQGNSNTVDGESTSGT). The 242-residue stretch at 168 to 409 (ISELQWLGSG…FRQTLMHLDI (242 aa)) folds into the Protein kinase domain. ATP-binding positions include 174-182 (LGSGAQGAV) and K195. The Proton acceptor role is filled by D279. Leucine-zipper regions lie at residues 433-454 (VKKHFEKIKSEGTCIHRLDEEL) and 486-507 (LSAIMLQLEMREKELIKREQAV). Disordered stretches follow at residues 534 to 599 (KRKG…RGSH), 611 to 655 (AQEN…HHPR), 744 to 834 (DIPS…RRQR), and 846 to 908 (STFS…GLSD). Residues 567 to 581 (SPLSGSPKMSTSSSK) are compositionally biased toward low complexity. A compositionally biased stretch (basic residues) spans 582 to 594 (SRYRSKPRHRRGN). Polar residues-rich tracts occupy residues 611–629 (AQENSPHPTYLHQAQSQYP) and 785–795 (RSESSLGTSHL). A compositionally biased stretch (acidic residues) spans 814-827 (DSSEEEEGEVDSEV). The segment at 815–828 (SSEEEEGEVDSEVE) is acidic. The span at 846–855 (STFSSENFSV) shows a compositional bias: polar residues. The span at 873–887 (LADKLEDRLAEKLDD) shows a compositional bias: basic and acidic residues.

Belongs to the protein kinase superfamily. STE Ser/Thr protein kinase family. MAP kinase kinase kinase subfamily. As to quaternary structure, homodimer; forms dimers through the leucine-zipper motif. Interacts with the C-terminus of MAPK8IP1 through the kinase catalytic domain. Binds PRDX3. Associates with the IKK complex through the kinase domain. Mg(2+) is required as a cofactor. In terms of processing, autophosphorylated on serine and threonine residues. As to expression, expressed in the adult brain, liver, placenta and pancreas, with expression strongest in the pancreas.

Its subcellular location is the cytoplasm. The protein localises to the membrane. The catalysed reaction is L-seryl-[protein] + ATP = O-phospho-L-seryl-[protein] + ADP + H(+). The enzyme catalyses L-threonyl-[protein] + ATP = O-phospho-L-threonyl-[protein] + ADP + H(+). Activated by autophosphorylation and homodimerization. In terms of biological role, activates the JUN N-terminal pathway through activation of the MAP kinase kinase MAP2K7. Acts synergistically with PRDX3 to regulate the activation of NF-kappa-B in the cytosol. This activation is kinase-dependent and involves activating the IKK complex, the IKBKB-containing complex that phosphorylates inhibitors of NF-kappa-B. The polypeptide is Mitogen-activated protein kinase kinase kinase 13 (Homo sapiens (Human)).